We begin with the raw amino-acid sequence, 1173 residues long: TBC1 domain family member 5 homolog A (1173 aa).

Disordered regions lie at residues lysine 22–glutamate 203, asparagine 217–asparagine 324, aspartate 425–serine 446, and isoleucine 823–glycine 872. Composition is skewed to low complexity over residues serine 26–asparagine 107, asparagine 127–glutamate 203, and asparagine 217–tyrosine 290. A coiled-coil region spans residues asparagine 163–tyrosine 214. Basic and acidic residues predominate over residues glutamine 299–aspartate 313. Over residues serine 314 to asparagine 324 the composition is skewed to polar residues. A Rab-GAP TBC domain is found at proline 374–serine 729. Residues glutamine 431–glutamine 441 are compositionally biased toward low complexity. Positions threonine 885–valine 930 form a coiled coil. Residues asparagine 983–valine 994 show a composition bias toward polar residues. Disordered regions lie at residues asparagine 983–serine 1015 and glutamine 1054–asparagine 1089. Low complexity-rich tracts occupy residues glutamine 995–serine 1015 and glutamine 1054–glutamine 1078. Residues asparagine 1079–asparagine 1089 show a composition bias toward polar residues.

May act as a GTPase-activating protein for Rab family protein(s). The sequence is that of TBC1 domain family member 5 homolog A (tbc1d5A) from Dictyostelium discoideum (Social amoeba).